A 223-amino-acid chain; its full sequence is Urease accessory protein UreG (223 aa).

Residues 1 to 31 (MAKHSHDHTHDHHDRPRRVRKPGEPLRIGVG) form a disordered region. 32–39 (GPVGSGKT) is a binding site for GTP.

This sequence belongs to the SIMIBI class G3E GTPase family. UreG subfamily. In terms of assembly, homodimer. UreD, UreF and UreG form a complex that acts as a GTP-hydrolysis-dependent molecular chaperone, activating the urease apoprotein by helping to assemble the nickel containing metallocenter of UreC. The UreE protein probably delivers the nickel.

The protein localises to the cytoplasm. Its function is as follows. Facilitates the functional incorporation of the urease nickel metallocenter. This process requires GTP hydrolysis, probably effectuated by UreG. The sequence is that of Urease accessory protein UreG from Mycobacterium marinum (strain ATCC BAA-535 / M).